A 3224-amino-acid polypeptide reads, in one-letter code: MRRSKADVERYIASVQGSTPSPRQKSIKGFYFAKLYYEAKEYDLAKKYICTYINVQERDPKAHRFLGLLYELEENTDKAVECYRRSVELNPTQKDLVLKIAELLCKNDVTDGRAKYWVERAAKLFPGSPAVYKLKEQLLDCEGEDGWNKLFDLIQSELYVRPDDVHVNIRLVEVYRSTKRLKDAVAHCHEAERNIALRSSLEWNSCVVQTLKEYLESLQCLESDKSDWRATNTDLLLAYANLMLLTLSTRDVQESRELLESFDSALQSVKSLGGNDELSATFLEMKGHFYMHAGSLLLKMGQHSSNVQWRALSELAALCYLIAFQVPRPKIKLIKGEAGQNLLEMMACDRLSQSGHMLLNLSRGKQDFLREIVETFANKSGQSALYDALFSSQSPKDTSFLGSDDIGNIDVREPELEDLARYDVGAIRAHDGSLQHLTWLGLQWNSLPALPGIRKWLKQLFHHLPQETSRLETNAPESICILDLEVFLLGVVYTSHLQLKEKCNSHHSSYQPLCLPLPVCKQLCTERQKSWWDAVCTLIHRKAVPGNAAKLRLLVQHEINTLRAQEKHGLQPALLVHWAKCLQKTGSGLNSFYDQREYIGRSVHYWKKVLPLLKIIKKKNSIPEPIDPLFKHFHSVDIQASEIVEYEEDAHITFAILDVVNGNIEDAMTAFESIQSVVSYWNLALIFHRKAEDIENDALSPEEQEECKNYLRKTRDYLIKIIDDSDSNLSVVKKLPVPLESVKEMLKSVMQELEAYSEGGPLYTNGSLRNADSEIKHSTPSHTRYSLSPSKSYKYSPKTPPRWAEDQNSLLKMICQQVEAIKKEMQELKLNSSNSASPHRWPTENYGPDSVPDGYQGSQTFHGAPLTVATTGPSVYYSQSPAYNSQYLLRPAANVTPTKGPVYGMNRLPPQQHIYAYPQQMHTPPVQSSSACMFSQEMYGPPALRFESPATGILSPRGDDYFNYNVQQTSTNPPLPEPGYFTKPPIAAHASRSAESKTIEFGKTNFVQPMPGEGLRPSLPTQAHTTQPTPFKFNSNFKSNDGDFTFSSPQVVTQPPPAAYSNSESLLGLLTSDKPLQGDGYSGAKPIPGGQTIGPRNTFNFGSKNVSGISFTENMGSSQQKNSGFRRSDDMFTFHGPGKSVFGTPTLETANKNHETDGGSAHGDDDDDGPHFEPVVPLPDKIEVKTGEEDEEEFFCNRAKLFRFDVESKEWKERGIGNVKILRHKTSGKIRLLMRREQVLKICANHYISPDMKLTPNAGSDRSFVWHALDYADELPKPEQLAIRFKTPEEAALFKCKFEEAQSILKAPGTNVATASNQAVRIVKEPTSHDNKDICKSDAGNLNFEFQFAKKEGSWWHCNSCSLKNASTAKKCVSCQNLNPSNKELVGPPLAETVFTPKTSPENVQDRFALVTPKKEGHWDCSICLVRNEPTVSRCIACQNTKSANKSGSSFVHQASFKFGQGDLPKPINSDFRSVFSTKEGQWDCSACLVQNEGSSTKCAACQNPRKQSLPATSIPTPASFKFGTSETSKTLKSGFEDMFAKKEGQWDCSSCLVRNEANATRCVACQNPDKPSPSTSVPAPASFKFGTSETSKAPKSGFEGMFTKKEGQWDCSVCLVRNEASATKCVACQNPGKQNQTTSAVSTPASSETSRAPKSGFEGMFTKKEGQWDCSVCLVRNEASATKCIACQSPGKQNQTTSAVSTPASSETSKAPKSGFEGMFTKKEGQWDCSVCLVRNEASATKCIACQCPSKQNQTTAISTPASSEISKAPKSGFEGMFIRKGQWDCSVCCVQNESSSLKCVACDASKPTHKPIAEAPSAFTLGSEMKLHDSPGSQVGTGFKSNFSEKASKFGNTEQGFKFGHVDQENSPSFMFQGSSNTEFKSTKEGFSIPVSADGFKFGISEPGNQEKKSEKPLENDTGFQAQDISGQKNGSGVIFGQTSSTFTFADLAKSTSGEGFQFGKKDPNFKGFSGAGEKLFSSQYGKMANKANTSGDFEKDDDAYKTEDSDDIHFEPVVQMPEKVELVTGEEDEKVLYSQRVKLFRFDAEVSQWKERGLGNLKILKNEVNGKLRMLMRREQVLKVCANHWITTTMNLKPLSGSDRAWMWLASDFSDGDAKLEQLAAKFKTPELAEEFKQKFEECQRLLLDIPLQTPHKLVDTGRAAKLIQRAEEMKSGLKDFKTFLTNDQTKVTEEENKGSGTGAAGASDTTIKPNPENTGPTLEWDNYDLREDALDDSVSSSSVHASPLASSPVRKNLFRFGESTTGFNFSFKSALSPSKSPGKLNQSGTSVGTDEESDVTQEEERDGQYFEPVVPLPDLVEVSSGEENEQVVFSHRAKLYRYDKDVGQWKERGIGDIKILQNYDNKQVRIVMRRDQVLKLCANHRITPDMTLQNMKGTERVWLWTAYDFADGERKVEHLAVRFKLQDVADSFKKIFDEAKTAQEKDSLITPHVSRSSTPRESPCGKIAVAVLEETTRERTDVTQGDDVADAASEVEVSSTSETTTKAVVSPPKFVFGSESVKSIFSSEKSKPFAFGNTSATGSLFGFSFNAPLKSNNSETSSVAQSGSESKVEPNKCELSKNSDIEQSSDSKVKNLSASFPTEESSINYTFKTPEKAKEKKKPEDSPSDDDVLIVYELTPTAEQKALATKLKLPPTFFCYKNRPDYVSEEEEDDEDFETAVKKLNGKLYLEGSEKCRPLEENTADNEKECIIVWEKKPTVEEKAKADTLKLPPTFFCGVCSDTDEDNGNGEDFQSELQKVQEAQKSQTEEITSTTDSVYTGGTEVMVPSFCKSEEPDSITKSISSPSVSSETMDKPVDLSTRKEIDTDSTSQGESKIVSFGFGSSTGLSFADLASSNSGDFAFGSKDKNFQWANTGAAVFGTQSVGTQSAGKVGEDEDGSDEEVVHNEDIHFEPIVSLPEVEVKSGEEDEEILFKERAKLYRWDRDVSQWKERGVGDIKILWHTMKNYYRILMRRDQVFKVCANHVITKTMELKPLNVSNNALVWTASDYADGEAKVEQLAVRFKTKEVADCFKKTFEECQQNLMKLQKGHVSLAAELSKETNPVVFFDVCADGEPLGRITMELFSNIVPRTAENFRALCTGEKGFGFKNSIFHRVIPDFVCQGGDITKHDGTGGQSIYGDKFEDENFDVKHTGPGLLSMANQGQNTNNSQFFITLKKAELLDFKHVVFGFVKDGMDTVKKIESFGSPKGSVCRRITITECGQI.

Thr-19 bears the Phosphothreonine mark. Ser-21 carries the phosphoserine modification. TPR repeat units lie at residues 26–59 (SIKG…QERD), 60–93 (PKAH…NPTQ), 94–128 (KDLV…FPGS), 165–201 (VHVN…RSSL), 287–319 (GHFY…AALC), 583–616 (QKTG…LKII), and 648–681 (EDAH…VSYW). A disordered region spans residues 767–802 (SLRNADSEIKHSTPSHTRYSLSPSKSYKYSPKTPPR). Thr-779 carries the phosphothreonine modification. Phosphoserine is present on residues Ser-781, Ser-788, and Ser-837. Low complexity predominate over residues 785–797 (YSLSPSKSYKYSP). Asymmetric dimethylarginine is present on Arg-945. Ser-948 and Ser-955 each carry phosphoserine. Repeat 1 spans residues 1001 to 1002 (FG). Residues 1001–3206 (FGKTNFVQPM…DTVKKIESFG (2206 aa)) form a 22 X 2 AA repeats of F-G region. Arg-1016 carries the post-translational modification Asymmetric dimethylarginine; alternate. Omega-N-methylarginine; alternate is present on Arg-1016. The residue at position 1098 (Thr-1098) is a Phosphothreonine. Repeat 2 spans residues 1101-1102 (FG). 3 positions are modified to phosphoserine: Ser-1103, Ser-1107, and Ser-1110. The disordered stretch occupies residues 1138–1174 (GKSVFGTPTLETANKNHETDGGSAHGDDDDDGPHFEP). Copy 3 of the repeat occupies 1142–1143 (FG). Thr-1144 is subject to Phosphothreonine. Phosphoserine occurs at positions 1160 and 1249. One can recognise a RanBD1 1 domain in the interval 1171-1307 (HFEPVVPLPD…FEEAQSILKA (137 aa)). Residue Lys-1350 forms a Glycyl lysine isopeptide (Lys-Gly) (interchain with G-Cter in SUMO2) linkage. The RanBP2-type 1 zinc finger occupies 1351–1381 (KEGSWWHCNSCSLKNASTAKKCVSCQNLNPS). Residues Thr-1396 and Thr-1412 each carry the phosphothreonine modification. Lys-1414 participates in a covalent cross-link: Glycyl lysine isopeptide (Lys-Gly) (interchain with G-Cter in SUMO2). Residues 1415–1444 (KEGHWDCSICLVRNEPTVSRCIACQNTKSA) form a RanBP2-type 2 zinc finger. Residues Ser-1443, Ser-1450, and Ser-1456 each carry the phosphoserine modification. Repeat 4 spans residues 1459 to 1460 (FG). A RanBP2-type 3 zinc finger spans residues 1479–1508 (KEGQWDCSACLVQNEGSSTKCAACQNPRKQ). Ser-1509 and Ser-1520 each carry phosphoserine. The stretch at 1523-1524 (FG) is repeat 5. A RanBP2-type 4 zinc finger spans residues 1543-1572 (KEGQWDCSSCLVRNEANATRCVACQNPDKP). Residues 1569–1595 (PDKPSPSTSVPAPASFKFGTSETSKAP) form a disordered region. At Ser-1573 the chain carries Phosphoserine. Residues 1573-1583 (SPSTSVPAPAS) show a composition bias toward low complexity. The stretch at 1586-1587 (FG) is repeat 6. Residue Lys-1596 forms a Glycyl lysine isopeptide (Lys-Gly) (interchain with G-Cter in SUMO2) linkage. Residue Lys-1605 forms a Glycyl lysine isopeptide (Lys-Gly) (interchain with G-Cter in SUMO1); alternate linkage. Lys-1605 participates in a covalent cross-link: Glycyl lysine isopeptide (Lys-Gly) (interchain with G-Cter in SUMO2); alternate. The segment at 1606-1635 (KEGQWDCSVCLVRNEASATKCVACQNPGKQ) adopts a RanBP2-type 5 zinc-finger fold. The segment covering 1632 to 1653 (PGKQNQTTSAVSTPASSETSRA) has biased composition (polar residues). The segment at 1632–1657 (PGKQNQTTSAVSTPASSETSRAPKSG) is disordered. Lys-1655 participates in a covalent cross-link: Glycyl lysine isopeptide (Lys-Gly) (interchain with G-Cter in SUMO2). Residue Lys-1664 forms a Glycyl lysine isopeptide (Lys-Gly) (interchain with G-Cter in SUMO1); alternate linkage. Residue Lys-1664 forms a Glycyl lysine isopeptide (Lys-Gly) (interchain with G-Cter in SUMO2); alternate linkage. The segment at 1665-1694 (KEGQWDCSVCLVRNEASATKCIACQSPGKQ) adopts a RanBP2-type 6 zinc-finger fold. Positions 1691–1712 (PGKQNQTTSAVSTPASSETSKA) are enriched in polar residues. Residues 1691–1716 (PGKQNQTTSAVSTPASSETSKAPKSG) form a disordered region. Lys-1714 is covalently cross-linked (Glycyl lysine isopeptide (Lys-Gly) (interchain with G-Cter in SUMO2)). A Glycyl lysine isopeptide (Lys-Gly) (interchain with G-Cter in SUMO1); alternate cross-link involves residue Lys-1723. A Glycyl lysine isopeptide (Lys-Gly) (interchain with G-Cter in SUMO2); alternate cross-link involves residue Lys-1723. RanBP2-type zinc fingers lie at residues 1724–1753 (KEGQ…PSKQ) and 1781–1810 (RKGQ…SKPT). Residue Ser-1835 is modified to Phosphoserine. 2 repeat units span residues 1852–1853 (FG) and 1861–1862 (FG). 2 positions are modified to phosphoserine: Ser-1869 and Ser-1871. 3 repeat units span residues 1900 to 1901 (FG), 1938 to 1939 (FG), and 1961 to 1962 (FG). Lys-1977 bears the N6-acetyllysine mark. Thr-2005 carries the post-translational modification Phosphothreonine. Ser-2008 bears the Phosphoserine mark. The RanBD1 2 domain occupies 2012 to 2148 (HFEPVVQMPE…FEECQRLLLD (137 aa)). A Glycyl lysine isopeptide (Lys-Gly) (interchain with G-Cter in SUMO2) cross-link involves residue Lys-2022. The interval 2147–2287 (LDIPLQTPHK…SKSPGKLNQS (141 aa)) is interaction with BICD2. At Thr-2153 the chain carries Phosphothreonine. The tract at residues 2188-2224 (QTKVTEEENKGSGTGAAGASDTTIKPNPENTGPTLEW) is disordered. Over residues 2211-2220 (IKPNPENTGP) the composition is skewed to polar residues. Phosphoserine occurs at positions 2246 and 2251. Residues 2260–2261 (FG) form repeat 12. Phosphoserine is present on residues Ser-2270, Ser-2280, and Ser-2290. Polar residues predominate over residues 2274–2292 (ALSPSKSPGKLNQSGTSVG). The interval 2274–2307 (ALSPSKSPGKLNQSGTSVGTDEESDVTQEEERDG) is disordered. Thr-2293 is subject to Phosphothreonine. The span at 2293–2305 (TDEESDVTQEEER) shows a compositional bias: acidic residues. The residue at position 2297 (Ser-2297) is a Phosphoserine. One can recognise a RanBD1 3 domain in the interval 2309-2445 (YFEPVVPLPD…FDEAKTAQEK (137 aa)). Phosphoserine occurs at positions 2462, 2493, and 2510. Repeat 13 spans residues 2516–2517 (FG). Lys-2522 participates in a covalent cross-link: Glycyl lysine isopeptide (Lys-Gly) (interchain with G-Cter in SUMO2). Ser-2526 is modified (phosphoserine). Tandem repeats lie at residues 2535 to 2536 (FG) and 2545 to 2546 (FG). Residues 2556–2569 (NNSETSSVAQSGSE) show a composition bias toward polar residues. Residues 2556–2629 (NNSETSSVAQ…KKKPEDSPSD (74 aa)) form a disordered region. Residues 2570 to 2593 (SKVEPNKCELSKNSDIEQSSDSKV) show a composition bias toward basic and acidic residues. Lys-2592 is covalently cross-linked (Glycyl lysine isopeptide (Lys-Gly) (interchain with G-Cter in SUMO)). Lys-2594 participates in a covalent cross-link: Glycyl lysine isopeptide (Lys-Gly) (interchain with G-Cter in SUMO1); alternate. A Glycyl lysine isopeptide (Lys-Gly) (interchain with G-Cter in SUMO2); alternate cross-link involves residue Lys-2594. Positions 2594-2611 (KNLSASFPTEESSINYTF) are enriched in polar residues. Lys-2612 participates in a covalent cross-link: Glycyl lysine isopeptide (Lys-Gly) (interchain with G-Cter in SUMO2). At Thr-2613 the chain carries Phosphothreonine. Basic and acidic residues predominate over residues 2613 to 2625 (TPEKAKEKKKPED). Residues 2631 to 2635 (DVLIV) are interaction with sumoylated RANGAP1. A run of 2 repeats spans residues 2633-2685 (LIVY…KKLN) and 2711-2761 (IIVW…QKVQ). An interaction with UBE2I region spans residues 2633-2685 (LIVYELTPTAEQKALATKLKLPPTFFCYKNRPDYVSEEEEDDEDFETAVKKLN). The required for E3 SUMO-ligase activity stretch occupies residues 2633–2710 (LIVYELTPTA…ENTADNEKEC (78 aa)). The 2 X 50 AA approximate repeats stretch occupies residues 2633–2761 (LIVYELTPTA…DFQSELQKVQ (129 aa)). Tyr-2666 is modified (phosphotyrosine). Residues Ser-2668 and Ser-2741 each carry the phosphoserine modification. Residues 2686–2761 (GKLYLEGSEK…DFQSELQKVQ (76 aa)) are interaction with SUMO1. Position 2743 is a phosphothreonine (Thr-2743). The disordered stretch occupies residues 2791–2818 (CKSEEPDSITKSISSPSVSSETMDKPVD). Residue Lys-2792 forms a Glycyl lysine isopeptide (Lys-Gly) (interchain with G-Cter in SUMO2) linkage. A compositionally biased stretch (low complexity) spans 2799 to 2810 (ITKSISSPSVSS). Residue Ser-2805 is modified to Phosphoserine. Lys-2815 participates in a covalent cross-link: Glycyl lysine isopeptide (Lys-Gly) (interchain with G-Cter in SUMO2). 4 tandem repeats follow at residues 2840–2841 (FG), 2842–2843 (FG), 2863–2864 (FG), and 2880–2881 (FG). A Phosphoserine modification is found at Ser-2900. The 136-residue stretch at 2911 to 3046 (HFEPIVSLPE…FEECQQNLMK (136 aa)) folds into the RanBD1 4 domain. Residues 3067–3223 (FFDVCADGEP…RRITITECGQ (157 aa)) form the PPIase cyclophilin-type domain. A run of 3 repeats spans residues 3106–3107 (FG), 3189–3190 (FG), and 3205–3206 (FG). Ser-3207 bears the Phosphoserine mark.

This sequence belongs to the RanBP2 E3 ligase family. Part of the nuclear pore complex. Forms a complex with NXT1, NXF1 and RANGAP1. Forms a tight complex with RANBP1 and UBE2I. Interacts with SUMO1 but not SUMO2. Interacts with PRKN. Interacts with sumoylated RANGAP1. Interacts with CDCA8. Interacts with PML (isoform PML-4). Interacts with BICD2. Interacts with MCM3AP isoform GANP. Interacts with COX11. Interacts with synaptic plasticity regulator PANTS. Post-translationally, polyubiquitinated by PRKN, which leads to proteasomal degradation. In terms of processing, the inner channel of the NPC has a different redox environment from the cytoplasm and allows the formation of interchain disulfide bonds between some nucleoporins, the significant increase of these linkages upon oxidative stress reduces the permeability of the NPC.

Its subcellular location is the nucleus. The protein resides in the nucleus membrane. It localises to the nuclear pore complex. The protein localises to the nucleus envelope. Its pathway is protein modification; protein sumoylation. Functionally, E3 SUMO-protein ligase which facilitates SUMO1 and SUMO2 conjugation by UBE2I. Involved in transport factor (Ran-GTP, karyopherin)-mediated protein import via the F-G repeat-containing domain which acts as a docking site for substrates. Component of the nuclear export pathway. Specific docking site for the nuclear export factor exportin-1. Inhibits EIF4E-dependent mRNA export. Sumoylates PML at 'Lys-490' which is essential for the proper assembly of PML-NB. Recruits BICD2 to the nuclear envelope and cytoplasmic stacks of nuclear pore complex known as annulate lamellae during G2 phase of cell cycle. Binds single-stranded RNA (in vitro). Probable inactive PPIase with no peptidyl-prolyl cis-trans isomerase activity. The polypeptide is E3 SUMO-protein ligase RanBP2 (RANBP2) (Pan troglodytes (Chimpanzee)).